The sequence spans 399 residues: Pyridinium-3,5-bisthiocarboxylic acid mononucleotide nickel insertion protein (399 aa).

The protein belongs to the LarC family.

The catalysed reaction is Ni(II)-pyridinium-3,5-bisthiocarboxylate mononucleotide = pyridinium-3,5-bisthiocarboxylate mononucleotide + Ni(2+). Involved in the biosynthesis of a nickel-pincer cofactor ((SCS)Ni(II) pincer complex). Binds Ni(2+), and functions in nickel delivery to pyridinium-3,5-bisthiocarboxylic acid mononucleotide (P2TMN), to form the mature cofactor. Is thus probably required for the activation of nickel-pincer cofactor-dependent enzymes. The sequence is that of Pyridinium-3,5-bisthiocarboxylic acid mononucleotide nickel insertion protein from Clostridium kluyveri (strain ATCC 8527 / DSM 555 / NBRC 12016 / NCIMB 10680 / K1).